Here is a 243-residue protein sequence, read N- to C-terminus: NAD-dependent protein deacetylase (243 aa).

The 243-residue stretch at 1 to 243 (MRNDLETLKH…VSVVKSLMTE (243 aa)) folds into the Deacetylase sirtuin-type domain. Positions 24, 35, 36, 105, 107, 108, and 123 each coordinate NAD(+). F35 provides a ligand contact to nicotinamide. 2 residues coordinate nicotinamide: I107 and D108. The Proton acceptor role is filled by H123. 4 residues coordinate Zn(2+): C131, C134, C151, and C154. NAD(+) is bound by residues S192, S193, N215, and D232.

Belongs to the sirtuin family. Class U subfamily. Zn(2+) is required as a cofactor.

It localises to the cytoplasm. The catalysed reaction is N(6)-acetyl-L-lysyl-[protein] + NAD(+) + H2O = 2''-O-acetyl-ADP-D-ribose + nicotinamide + L-lysyl-[protein]. NAD-dependent protein deacetylase which modulates the activities of several enzymes which are inactive in their acetylated form. This is NAD-dependent protein deacetylase from Staphylococcus aureus (strain MSSA476).